Consider the following 226-residue polypeptide: Transcription factor bHLH115 (226 aa).

The bHLH domain occupies 66–117 (TGSNSKACREKQRRDRLNDKFTELSSVLEPGRTPKTDKVAIINDAIRMVNQA).

In terms of assembly, homodimer. Interacts with BTS and BHLH47/PYE.

The protein localises to the nucleus. This chain is Transcription factor bHLH115 (BHLH115), found in Arabidopsis thaliana (Mouse-ear cress).